The chain runs to 183 residues: Translation initiation factor IF-3 (183 aa).

It belongs to the IF-3 family. As to quaternary structure, monomer.

The protein localises to the cytoplasm. Its function is as follows. IF-3 binds to the 30S ribosomal subunit and shifts the equilibrium between 70S ribosomes and their 50S and 30S subunits in favor of the free subunits, thus enhancing the availability of 30S subunits on which protein synthesis initiation begins. The protein is Translation initiation factor IF-3 of Azobacteroides pseudotrichonymphae genomovar. CFP2.